A 220-amino-acid chain; its full sequence is ATP-dependent Clp protease proteolytic subunit (220 aa).

The active-site Nucleophile is serine 122. Histidine 147 is a catalytic residue.

It belongs to the peptidase S14 family. In terms of assembly, fourteen ClpP subunits assemble into 2 heptameric rings which stack back to back to give a disk-like structure with a central cavity, resembling the structure of eukaryotic proteasomes.

It localises to the cytoplasm. The enzyme catalyses Hydrolysis of proteins to small peptides in the presence of ATP and magnesium. alpha-casein is the usual test substrate. In the absence of ATP, only oligopeptides shorter than five residues are hydrolyzed (such as succinyl-Leu-Tyr-|-NHMec, and Leu-Tyr-Leu-|-Tyr-Trp, in which cleavage of the -Tyr-|-Leu- and -Tyr-|-Trp bonds also occurs).. Cleaves peptides in various proteins in a process that requires ATP hydrolysis. Has a chymotrypsin-like activity. Plays a major role in the degradation of misfolded proteins. The polypeptide is ATP-dependent Clp protease proteolytic subunit (Colwellia psychrerythraea (strain 34H / ATCC BAA-681) (Vibrio psychroerythus)).